The following is a 161-amino-acid chain: Allophycocyanin subunit alpha-B (161 aa).

Asparagine 71 bears the N4-methylasparagine mark. Residue cysteine 81 participates in (2R,3E)-phycocyanobilin binding.

The protein belongs to the phycobiliprotein family. As to quaternary structure, heterodimer of an alpha-B and a beta chain forming AP-B. Post-translationally, contains one covalently linked bilin chromophore. The chromophore is added by phycocyanobilin lyase CpcUS.

It is found in the cellular thylakoid membrane. In terms of biological role, a variant alpha-allophycocyanin (AP) which forms a complex with beta-AP with maximum absorption at approximately 670 nanometers. It is an important phycobilisome terminal emitter involved in energy transfer to photosystem I. The sequence is that of Allophycocyanin subunit alpha-B (apcD) from Picosynechococcus sp. (strain ATCC 27264 / PCC 7002 / PR-6) (Agmenellum quadruplicatum).